The primary structure comprises 345 residues: Phosphoribosylformylglycinamidine cyclo-ligase (345 aa).

This sequence belongs to the AIR synthase family.

It is found in the cytoplasm. It catalyses the reaction 2-formamido-N(1)-(5-O-phospho-beta-D-ribosyl)acetamidine + ATP = 5-amino-1-(5-phospho-beta-D-ribosyl)imidazole + ADP + phosphate + H(+). Its pathway is purine metabolism; IMP biosynthesis via de novo pathway; 5-amino-1-(5-phospho-D-ribosyl)imidazole from N(2)-formyl-N(1)-(5-phospho-D-ribosyl)glycinamide: step 2/2. The protein is Phosphoribosylformylglycinamidine cyclo-ligase of Mannheimia succiniciproducens (strain KCTC 0769BP / MBEL55E).